The primary structure comprises 620 residues: Dihydroxy-acid dehydratase (620 aa).

Asp82 is a binding site for Mg(2+). Cys123 provides a ligand contact to [2Fe-2S] cluster. Residues Asp124 and Lys125 each contribute to the Mg(2+) site. The residue at position 125 (Lys125) is an N6-carboxylysine. A [2Fe-2S] cluster-binding site is contributed by Cys197. Glu493 lines the Mg(2+) pocket. Catalysis depends on Ser519, which acts as the Proton acceptor.

Belongs to the IlvD/Edd family. In terms of assembly, homodimer. [2Fe-2S] cluster serves as cofactor. The cofactor is Mg(2+).

The catalysed reaction is (2R)-2,3-dihydroxy-3-methylbutanoate = 3-methyl-2-oxobutanoate + H2O. It catalyses the reaction (2R,3R)-2,3-dihydroxy-3-methylpentanoate = (S)-3-methyl-2-oxopentanoate + H2O. Its pathway is amino-acid biosynthesis; L-isoleucine biosynthesis; L-isoleucine from 2-oxobutanoate: step 3/4. It participates in amino-acid biosynthesis; L-valine biosynthesis; L-valine from pyruvate: step 3/4. In terms of biological role, functions in the biosynthesis of branched-chain amino acids. Catalyzes the dehydration of (2R,3R)-2,3-dihydroxy-3-methylpentanoate (2,3-dihydroxy-3-methylvalerate) into 2-oxo-3-methylpentanoate (2-oxo-3-methylvalerate) and of (2R)-2,3-dihydroxy-3-methylbutanoate (2,3-dihydroxyisovalerate) into 2-oxo-3-methylbutanoate (2-oxoisovalerate), the penultimate precursor to L-isoleucine and L-valine, respectively. The polypeptide is Dihydroxy-acid dehydratase (Bifidobacterium longum (strain NCC 2705)).